A 606-amino-acid polypeptide reads, in one-letter code: NADH-ubiquinone oxidoreductase chain 5 (606 aa).

Helical transmembrane passes span 1 to 21, 43 to 63, 87 to 107, 117 to 137, 140 to 160, 171 to 191, 201 to 221, 241 to 261, 273 to 293, 310 to 330, 365 to 385, 409 to 429, 457 to 477, 488 to 508, and 582 to 602; these read MNMFSSCMITALVILTLPIIM, AFMISMIPTMMFIYSGQETIF, MIFVPVALFVTWSIMEFSMWY, FFKYLLLFLITMMVLVTANNM, LFIGWEGVGIMSFLLIGWWYG, AVLYNRIGDVGFIMTMAWFLL, IFITTNDNFNLPLLGLLLAAT, TPVSALLHSSTMVVAGVFLLI, IQTLTLCLGAITTLFTAICAL, LGLMMVTIGINQPYLAFLHIC, VLPFTTTSLIIGSLALTGMPF, LLITLVATSLTAAYSTRIMFF, LLIGSVFAGYIISHSITPTTI, MTALAVTILGFILALELNLTT, and GLIKLYFLSFMLTMILSLLIL.

It belongs to the complex I subunit 5 family. Core subunit of respiratory chain NADH dehydrogenase (Complex I) which is composed of 45 different subunits.

The protein localises to the mitochondrion inner membrane. The enzyme catalyses a ubiquinone + NADH + 5 H(+)(in) = a ubiquinol + NAD(+) + 4 H(+)(out). Functionally, core subunit of the mitochondrial membrane respiratory chain NADH dehydrogenase (Complex I) which catalyzes electron transfer from NADH through the respiratory chain, using ubiquinone as an electron acceptor. Essential for the catalytic activity and assembly of complex I. This chain is NADH-ubiquinone oxidoreductase chain 5 (MT-ND5), found in Canis lupus familiaris (Dog).